We begin with the raw amino-acid sequence, 1061 residues long: DNA primase TraC (1061 aa).

The Toprim domain occupies 850–938; the sequence is PALVIGEGYA…GKAIFPIFAP (89 aa). Positions 1034-1061 are disordered; sequence EGQRQKVQQLKQQDIEQQEQRQRRARTY.

Functionally, required for autonomous replication in E.coli. Transferred into the recipient cell during bacterial conjugation. Catalyzes the synthesis of short oligoribonucleotide primers with CpA or pCpA at their 5'-termini on a single-stranded template DNA. This Escherichia coli protein is DNA primase TraC (traC).